Consider the following 431-residue polypeptide: uncharacterized protein (431 aa).

Positions 1–258 constitute a Peptidase S8 domain; that stretch reads MPSQMREAIT…HGLIDLERAG (258 aa).

This sequence belongs to the peptidase S8 family.

This is an uncharacterized protein from Sinorhizobium fredii (strain NBRC 101917 / NGR234).